The following is a 728-amino-acid chain: MSNEAKCPFHQAAGNGTSNRDWWPNQLDLSILHRHSSLSDPMGKDFNYAQAFEKLDLAAVKRDLHALMTTSQDWWPADFGHYGGLFIRMAWHSAGTYRTADGRGGAGEGQQRFAPLNSWPDNANLDKARRLLWPIKQKYGRAISWADLLILTGNVALESMGFKTFGFAGGRADTWEPEDVYWGSEKIWLELSGGPNSRYSGDRQLENPLAAVQMGLIYVNPEGPDGNPDPVAAARDIRDTFARMAMNDEETVALIAGGHTFGKTHGAGPASNVGAEPEAAGIEAQGLGWKSAYRTGKGADAITSGLEVTWTTTPTQWSHNFFENLFGYEWELTKSPAGAHQWVAKGADAVIPDAFDPSKKHRPTMLTTDLSLRFDPAYEKISRRFHENPEQFADAFARAWFKLTHRDMGPRARYLGPEVPAEVLLWQDPIPAVDHPLIDAADAAELKAKVLASGLTVSQLVSTAWAAASTFRGSDKRGGANGARIRLAPQKDWEANQPEQLAAVLETLEAIRTAFNGAQRGGKQVSLADLIVLAGCAGVEQAAKNAGHAVTVPFAPGRADASQEQTDVESMAVLEPVADGFRNYLKGKYRVPAEVLLVDKAQLLTLSAPEMTVLLGGLRVLGANVGQSRHGVFTAREQALTNDFFVNLLDMGTEWKPTAADADVFEGRDRATGALKWTGTRVDLVFGSHSQLRALAEVYGSADAQEKFVRDFVAVWNKVMNLDRFDLA.

Residues 91–218 (WHSAGTYRTA…LAAVQMGLIY (128 aa)) constitute a cross-link (tryptophyl-tyrosyl-methioninium (Trp-Tyr) (with M-244)). H92 (proton acceptor) is an active-site residue. The segment at residues 218 to 244 (YVNPEGPDGNPDPVAAARDIRDTFARM) is a cross-link (tryptophyl-tyrosyl-methioninium (Tyr-Met) (with W-91)). H259 is a binding site for heme b.

The protein belongs to the peroxidase family. Peroxidase/catalase subfamily. As to quaternary structure, homodimer or homotetramer. Heme b serves as cofactor. Formation of the three residue Trp-Tyr-Met cross-link is important for the catalase, but not the peroxidase activity of the enzyme.

The enzyme catalyses H2O2 + AH2 = A + 2 H2O. The catalysed reaction is 2 H2O2 = O2 + 2 H2O. Functionally, bifunctional enzyme with both catalase and broad-spectrum peroxidase activity. The sequence is that of Catalase-peroxidase from Burkholderia mallei (strain NCTC 10247).